A 74-amino-acid chain; its full sequence is Large ribosomal subunit protein bL31 (74 aa).

The protein belongs to the bacterial ribosomal protein bL31 family. Type A subfamily. Part of the 50S ribosomal subunit.

Its function is as follows. Binds the 23S rRNA. This chain is Large ribosomal subunit protein bL31, found in Xanthobacter autotrophicus (strain ATCC BAA-1158 / Py2).